The chain runs to 248 residues: Transcription termination/antitermination protein NusG (248 aa).

The 31-residue stretch at Lys-197–Val-227 folds into the KOW domain.

Belongs to the NusG family. Monomer. Homodimer.

Participates in transcription elongation, termination and antitermination. The polypeptide is Transcription termination/antitermination protein NusG (Aquifex aeolicus (strain VF5)).